The sequence spans 373 residues: Chaperone protein DnaJ (373 aa).

In terms of domain architecture, J spans 4 to 69 (NYYEILEISQ…EKRSIYDRYG (66 aa)). The CR-type zinc finger occupies 133-210 (GCKKKIDFSY…CHGNGYEEIK (78 aa)). Residues Cys-146, Cys-149, Cys-162, Cys-165, Cys-184, Cys-187, Cys-198, and Cys-201 each coordinate Zn(2+). CXXCXGXG motif repeat units follow at residues 146-153 (CKSCKGSG), 162-169 (CPHCGGKG), 184-191 (CDHCKGSG), and 198-205 (CKTCHGNG).

This sequence belongs to the DnaJ family. Homodimer. The cofactor is Zn(2+).

The protein localises to the cytoplasm. In terms of biological role, participates actively in the response to hyperosmotic and heat shock by preventing the aggregation of stress-denatured proteins and by disaggregating proteins, also in an autonomous, DnaK-independent fashion. Unfolded proteins bind initially to DnaJ; upon interaction with the DnaJ-bound protein, DnaK hydrolyzes its bound ATP, resulting in the formation of a stable complex. GrpE releases ADP from DnaK; ATP binding to DnaK triggers the release of the substrate protein, thus completing the reaction cycle. Several rounds of ATP-dependent interactions between DnaJ, DnaK and GrpE are required for fully efficient folding. Also involved, together with DnaK and GrpE, in the DNA replication of plasmids through activation of initiation proteins. This Campylobacter lari (strain RM2100 / D67 / ATCC BAA-1060) protein is Chaperone protein DnaJ.